The sequence spans 304 residues: Protein YIF1B (304 aa).

The Cytoplasmic portion of the chain corresponds to 1 to 146; sequence MMEYPNQSGF…APRFDINAPD (146 aa). Residues 21–54 are disordered; that stretch reads MRGSAMEPSDPTQLFDDTSSGVNKHEPGRVGKSP. Positions 30-42 are enriched in polar residues; that stretch reads DPTQLFDDTSSGV. Residues 147–167 traverse the membrane as a helical segment; that stretch reads LYIPVMGFITYVLVAGLALGT. At 168-182 the chain is on the extracellular side; that stretch reads QNRFSPEILGIQASS. Residues 183 to 203 traverse the membrane as a helical segment; sequence ALVWLIIEVLAVLLSLYLVTV. At 204 to 212 the chain is on the cytoplasmic side; it reads NTDLTTIDL. A helical transmembrane segment spans residues 213–233; the sequence is VAFSGYKYVGMIVGVVAGLLF. Residues 234–236 lie on the Extracellular side of the membrane; it reads GRT. A helical transmembrane segment spans residues 237-257; the sequence is GYYLALLWFCASIFVFTIRTL. Topologically, residues 258–282 are cytoplasmic; it reads RLKILSEAAAEGRLVRGTKNQLRMY. Residues 283–303 form a helical membrane-spanning segment; sequence LTMAIAAAQPVFMYWLTFHLV. Arg304 is a topological domain (extracellular).

It belongs to the YIF1 family.

It localises to the endoplasmic reticulum membrane. The protein localises to the golgi apparatus membrane. It is found in the endoplasmic reticulum-Golgi intermediate compartment membrane. Its function is as follows. Functions in endoplasmic reticulum to Golgi vesicle-mediated transport and regulates the proper organization of the endoplasmic reticulum and the Golgi. Plays a key role in targeting to neuronal dendrites receptors such as HTR1A. Plays also a role in primary cilium and sperm flagellum assembly probably through protein transport to these compartments. This is Protein YIF1B (yif1b) from Danio rerio (Zebrafish).